The following is a 243-amino-acid chain: Sugar fermentation stimulation protein homolog (243 aa).

It belongs to the SfsA family.

This Lacticaseibacillus casei (strain BL23) (Lactobacillus casei) protein is Sugar fermentation stimulation protein homolog.